The primary structure comprises 267 residues: MRLIPLKNDQQVAKWAASYIAQRINQFKPSAERPFVLGLPTGGTPLQTYQELIKLYQAGEVSFKYVVTFNMDEYVGLAQDHPESYHSFMHNNFFKHIDIQAQNINILDGNTDDHQQECHRYEEKIKYYGKIHLFMGGVGIDGHIAFNEPASSLGSRTRIKTLTEDTLIANSRFFNNDISQVPKYALTIGVATLLDAEEIMLLITGYNKALALQAGVEGSVNHLWTVSALQLHERSIIVCDEPATQELKVKTVKYFTQLEAQEIASVC.

Residue Asp72 is the Proton acceptor; for enolization step of the active site. Catalysis depends on Asp141, which acts as the For ring-opening step. Residue His143 is the Proton acceptor; for ring-opening step of the active site. The For ring-opening step role is filled by Glu148.

This sequence belongs to the glucosamine/galactosamine-6-phosphate isomerase family. NagB subfamily. In terms of assembly, homohexamer.

It carries out the reaction alpha-D-glucosamine 6-phosphate + H2O = beta-D-fructose 6-phosphate + NH4(+). It participates in amino-sugar metabolism; N-acetylneuraminate degradation; D-fructose 6-phosphate from N-acetylneuraminate: step 5/5. Its activity is regulated as follows. Allosterically activated by N-acetylglucosamine 6-phosphate (GlcNAc6P). In terms of biological role, catalyzes the reversible isomerization-deamination of glucosamine 6-phosphate (GlcN6P) to form fructose 6-phosphate (Fru6P) and ammonium ion. The protein is Glucosamine-6-phosphate deaminase of Haemophilus ducreyi (strain 35000HP / ATCC 700724).